We begin with the raw amino-acid sequence, 486 residues long: Amyloid-beta A4 precursor protein-binding family B member 3 (486 aa).

The WW domain maps to 29-61 (TGLPPGWRKIRDAAGTYYWHVPSGSTQWQRPTW). PID domains follow at residues 113–280 (EPGA…QVEL) and 285–440 (SQAA…RTSS). Positions 438–460 (TSSMDSPGGPLPPPLLKGGAGGA) are disordered.

In terms of assembly, interacts with APP (via intracellular domain). Interacts with APLP1 and APLP2 (via intracellular domain).

It is found in the cytoplasm. The protein localises to the nucleus. May modulate the internalization of amyloid-beta precursor protein. The polypeptide is Amyloid-beta A4 precursor protein-binding family B member 3 (Mus musculus (Mouse)).